The primary structure comprises 175 residues: Large ribosomal subunit protein uL10 (175 aa).

The protein belongs to the universal ribosomal protein uL10 family. Part of the ribosomal stalk of the 50S ribosomal subunit. The N-terminus interacts with L11 and the large rRNA to form the base of the stalk. The C-terminus forms an elongated spine to which L12 dimers bind in a sequential fashion forming a multimeric L10(L12)X complex.

Forms part of the ribosomal stalk, playing a central role in the interaction of the ribosome with GTP-bound translation factors. The chain is Large ribosomal subunit protein uL10 from Prochlorococcus marinus (strain MIT 9515).